Reading from the N-terminus, the 385-residue chain is Probable tRNA sulfurtransferase (385 aa).

The THUMP domain maps to 57 to 160 (DGVIERVKKV…RGNAYVFTDK (104 aa)). Residues 180-181 (ML), 205-206 (YY), Arg262, Gly284, and Gln293 contribute to the ATP site.

This sequence belongs to the ThiI family.

It is found in the cytoplasm. The enzyme catalyses [ThiI sulfur-carrier protein]-S-sulfanyl-L-cysteine + a uridine in tRNA + 2 reduced [2Fe-2S]-[ferredoxin] + ATP + H(+) = [ThiI sulfur-carrier protein]-L-cysteine + a 4-thiouridine in tRNA + 2 oxidized [2Fe-2S]-[ferredoxin] + AMP + diphosphate. It carries out the reaction [ThiS sulfur-carrier protein]-C-terminal Gly-Gly-AMP + S-sulfanyl-L-cysteinyl-[cysteine desulfurase] + AH2 = [ThiS sulfur-carrier protein]-C-terminal-Gly-aminoethanethioate + L-cysteinyl-[cysteine desulfurase] + A + AMP + 2 H(+). It participates in cofactor biosynthesis; thiamine diphosphate biosynthesis. Its function is as follows. Catalyzes the ATP-dependent transfer of a sulfur to tRNA to produce 4-thiouridine in position 8 of tRNAs, which functions as a near-UV photosensor. Also catalyzes the transfer of sulfur to the sulfur carrier protein ThiS, forming ThiS-thiocarboxylate. This is a step in the synthesis of thiazole, in the thiamine biosynthesis pathway. The sulfur is donated as persulfide by IscS. The protein is Probable tRNA sulfurtransferase of Clostridium perfringens (strain SM101 / Type A).